A 154-amino-acid polypeptide reads, in one-letter code: Deoxyuridine 5'-triphosphate nucleotidohydrolase (154 aa).

Substrate is bound by residues 64–66 (RSG), Asn77, 81–83 (TVD), and Lys91.

Belongs to the dUTPase family. As to quaternary structure, homotrimer. It depends on Mg(2+) as a cofactor.

It catalyses the reaction dUTP + H2O = dUMP + diphosphate + H(+). It participates in pyrimidine metabolism; dUMP biosynthesis; dUMP from dCTP (dUTP route): step 2/2. This enzyme is involved in nucleotide metabolism: it produces dUMP, the immediate precursor of thymidine nucleotides and it decreases the intracellular concentration of dUTP so that uracil cannot be incorporated into DNA. This chain is Deoxyuridine 5'-triphosphate nucleotidohydrolase, found in Mycolicibacterium gilvum (strain PYR-GCK) (Mycobacterium gilvum (strain PYR-GCK)).